A 534-amino-acid chain; its full sequence is MKQEGSARRRGADKAKPPPGGGEQEPPPPPAPQDVEMKEEAATGGGSTGEADGKTAAAAAEHSQRELDTVTLEDIKEHVKQLEKAVSGKEPRFVLRALRMLPSTSRRLNHYVLYKAVQGFFTSNNATRDFLLPFLEEPMDTEADLQFRPRTGKAASTPLLPEVEAYLQLLVVIFMMNSKRYKEAQKISDDLMQKISTQNRRALDLVAAKCYYYHARVYEFLDKLDVVRSFLHARLRTATLRHDADGQATLLNLLLRNYLHYSLYDQAEKLVSKSVFPEQANNNEWARYLYYTGRIKAIQLEYSEARRTMTNALRKAPQHTAVGFKQTVHKLLIVVELLLGEIPDRLQFRQPSLKRSLMPYFLLTQAVRTGNLAKFNQVLDQFGEKFQADGTYTLIIRLRHNVIKTGVRMISLSYSRISLADIAQKLQLDSPEDAEFIVAKAIRDGVIEASINHEKGYVQSKEMIDIYSTREPQLAFHQRISFCLDIHNMSVKAMRFPPKSYNKDLESAEERREREQQDLEFAKEMAEDDDDSFP.

A compositionally biased stretch (basic and acidic residues) spans 1 to 16 (MKQEGSARRRGADKAK). Residues 1 to 69 (MKQEGSARRR…AEHSQRELDT (69 aa)) form a disordered region. Positions 17 to 32 (PPPGGGEQEPPPPPAP) are enriched in pro residues. Residue Lys38 forms a Glycyl lysine isopeptide (Lys-Gly) (interchain with G-Cter in SUMO1); alternate linkage. A Glycyl lysine isopeptide (Lys-Gly) (interchain with G-Cter in SUMO2); alternate cross-link involves residue Lys38. One can recognise a PCI domain in the interval 286–465 (ARYLYYTGRI…GYVQSKEMID (180 aa)). Residues Ser418 and Ser430 each carry the phosphoserine modification. The segment at 500 to 534 (SYNKDLESAEERREREQQDLEFAKEMAEDDDDSFP) is disordered. Residues 501 to 525 (YNKDLESAEERREREQQDLEFAKEM) show a composition bias toward basic and acidic residues.

It belongs to the proteasome subunit S3 family. In terms of assembly, component of the 19S proteasome regulatory particle complex. The 26S proteasome consists of a 20S core particle (CP) and two 19S regulatory subunits (RP). The regulatory particle is made of a lid composed of 9 subunits including PSMD3, a base containing 6 ATPases and few additional components. Interacts with UBQLN1 (via ubiquitin-like domain). Interacts with ERCC6.

Its function is as follows. Component of the 26S proteasome, a multiprotein complex involved in the ATP-dependent degradation of ubiquitinated proteins. This complex plays a key role in the maintenance of protein homeostasis by removing misfolded or damaged proteins, which could impair cellular functions, and by removing proteins whose functions are no longer required. Therefore, the proteasome participates in numerous cellular processes, including cell cycle progression, apoptosis, or DNA damage repair. This Homo sapiens (Human) protein is 26S proteasome non-ATPase regulatory subunit 3 (PSMD3).